The sequence spans 161 residues: Cyclic pyranopterin monophosphate synthase (161 aa).

Residues 78–80 (MCH) and 116–117 (ME) contribute to the substrate site. Residue Asp131 is part of the active site.

The protein belongs to the MoaC family. Homohexamer; trimer of dimers.

The enzyme catalyses (8S)-3',8-cyclo-7,8-dihydroguanosine 5'-triphosphate = cyclic pyranopterin phosphate + diphosphate. It participates in cofactor biosynthesis; molybdopterin biosynthesis. Catalyzes the conversion of (8S)-3',8-cyclo-7,8-dihydroguanosine 5'-triphosphate to cyclic pyranopterin monophosphate (cPMP). This chain is Cyclic pyranopterin monophosphate synthase, found in Nitratidesulfovibrio vulgaris (strain ATCC 29579 / DSM 644 / CCUG 34227 / NCIMB 8303 / VKM B-1760 / Hildenborough) (Desulfovibrio vulgaris).